The following is a 184-amino-acid chain: Oligoribonuclease (184 aa).

One can recognise an Exonuclease domain in the interval 8–169; that stretch reads LIWIDLEMTG…EDIHESIIEL (162 aa). Tyrosine 129 is an active-site residue.

Belongs to the oligoribonuclease family.

It is found in the cytoplasm. 3'-to-5' exoribonuclease specific for small oligoribonucleotides. The sequence is that of Oligoribonuclease from Buchnera aphidicola subsp. Schizaphis graminum (strain Sg).